The chain runs to 103 residues: MAAKIRQNDEVIVLAGKDKGKRGKVTKVLPNGKVVVEGINIITKHEKPVPALGKAGGLVKKEAAIDASNVAIFNPETNKADRVGFRFEDGKKVRFFKSNEKTI.

The protein belongs to the universal ribosomal protein uL24 family. As to quaternary structure, part of the 50S ribosomal subunit.

One of two assembly initiator proteins, it binds directly to the 5'-end of the 23S rRNA, where it nucleates assembly of the 50S subunit. Functionally, one of the proteins that surrounds the polypeptide exit tunnel on the outside of the subunit. The sequence is that of Large ribosomal subunit protein uL24 from Glaesserella parasuis serovar 5 (strain SH0165) (Haemophilus parasuis).